Consider the following 259-residue polypeptide: MTTQQETLTDGNALKQFVVLAKSSKGRAIVSIIEKALNHPSVFVFGELLDMPNVQQLKETEFKNYYDLLLIFAYGSFIDYKNKKDSLPQLTPQMITKLKQLTIVFLSSTSNVIPYSVLQEQIEITNVRELEDLIIDSIYQNIIKGKLDQKNKHLEIDFSIGRDVQPEQLDSMINCLNNWSSTSQKLLDDISGLITHSDKVHLQYRKEKEEFESKFEIAKLNTKNDSPAEQLYYDSMEYSDEVRMKKGPKIKGKDYNKRP.

The 161-residue stretch at 1–161 (MTTQQETLTD…KHLEIDFSIG (161 aa)) folds into the PCI domain.

Belongs to the CSN7/EIF3M family. CSN7 subfamily. In terms of assembly, component of the CSN complex. The holocomplex is comprised of 8 subunits csn1-8. In the complex, it probably interacts directly with csn2, csn5, csn6 and csn8.

The protein localises to the cytoplasm. It localises to the nucleus. In terms of biological role, component of the COP9 signalosome complex (CSN), a complex involved in various cellular and developmental processes. The CSN complex is an essential regulator of the ubiquitin (Ubl) conjugation pathway by mediating the deneddylation of the cullin subunits of E3 ligase complexes, leading to modify the Ubl ligase activity. This Dictyostelium discoideum (Social amoeba) protein is COP9 signalosome complex subunit 7 (csn7).